A 545-amino-acid chain; its full sequence is MTTNYIFVTGGVVSSLGKGIAAASLAAILEARGLKVTIMKLDPYINVDPGTMSPTQHGEVFVTDDGAETDLDLGHYERFIRTRMSRRNNFTTGRIYSEVLRKERRGDYLGATIQVIPHITNAIKERIIEGGEGHDVVLVEIGGTVGDIESLPFLEAIRQMAVDVGREHTMYMHLTLVPYMAAAGEVKTKPTQHSVKELLSIGIQPDVLICRSDRAVPANERAKIALFCNVPEKAVISLKDVDSIYKIPGMLKSQGLDDYICKRFSLNAPEANLQEWEQVIYQEANPGGEVNIGMVGKYVELPDAYKSVIEALKHGGLKNRVTVNIKLIDSQDVETRGVELLKDLDAILIPGGFGYRGVEGKLMTAQYARENNIPYLGICLGMQVALMEFARNVAHMEGANSTEFVPDCKYPVVALITEWRDEEGNVEQRSEQSDLGGTMRLGSQQCQLTDGSLVRQLYGSDTIVERHRHRYEVNNMLLKQIEAAGLRVAGRSGDDQLVEIVEIPNHPWFVACQFHPEFTSTPRDGHPLFSGFVKAASEYQKRLAK.

Residues 1–266 are amidoligase domain; sequence MTTNYIFVTG…DDYICKRFSL (266 aa). Serine 14 contacts CTP. Serine 14 provides a ligand contact to UTP. ATP-binding positions include 15–20 and aspartate 72; that span reads SLGKGI. 2 residues coordinate Mg(2+): aspartate 72 and glutamate 140. Residues 147 to 149, 187 to 192, and lysine 223 contribute to the CTP site; these read DIE and KTKPTQ. Residues 187-192 and lysine 223 each bind UTP; that span reads KTKPTQ. 239-241 serves as a coordination point for ATP; it reads KDV. In terms of domain architecture, Glutamine amidotransferase type-1 spans 291 to 542; the sequence is NIGMVGKYVE…VKAASEYQKR (252 aa). Position 352 (glycine 352) interacts with L-glutamine. Residue cysteine 379 is the Nucleophile; for glutamine hydrolysis of the active site. Residues 380-383, glutamate 403, and arginine 470 each bind L-glutamine; that span reads LGMQ. Active-site residues include histidine 515 and glutamate 517.

This sequence belongs to the CTP synthase family. As to quaternary structure, homotetramer.

It carries out the reaction UTP + L-glutamine + ATP + H2O = CTP + L-glutamate + ADP + phosphate + 2 H(+). It catalyses the reaction L-glutamine + H2O = L-glutamate + NH4(+). The enzyme catalyses UTP + NH4(+) + ATP = CTP + ADP + phosphate + 2 H(+). It participates in pyrimidine metabolism; CTP biosynthesis via de novo pathway; CTP from UDP: step 2/2. Its activity is regulated as follows. Allosterically activated by GTP, when glutamine is the substrate; GTP has no effect on the reaction when ammonia is the substrate. The allosteric effector GTP functions by stabilizing the protein conformation that binds the tetrahedral intermediate(s) formed during glutamine hydrolysis. Inhibited by the product CTP, via allosteric rather than competitive inhibition. In terms of biological role, catalyzes the ATP-dependent amination of UTP to CTP with either L-glutamine or ammonia as the source of nitrogen. Regulates intracellular CTP levels through interactions with the four ribonucleotide triphosphates. The protein is CTP synthase of Erwinia tasmaniensis (strain DSM 17950 / CFBP 7177 / CIP 109463 / NCPPB 4357 / Et1/99).